Reading from the N-terminus, the 179-residue chain is Ribosome maturation factor RimM (179 aa).

In terms of domain architecture, PRC barrel spans 102–173 (PEEYHYRDLI…ALHVQPPPGL (72 aa)).

This sequence belongs to the RimM family. Binds ribosomal protein uS19.

It is found in the cytoplasm. An accessory protein needed during the final step in the assembly of 30S ribosomal subunit, possibly for assembly of the head region. Essential for efficient processing of 16S rRNA. May be needed both before and after RbfA during the maturation of 16S rRNA. It has affinity for free ribosomal 30S subunits but not for 70S ribosomes. This Synechococcus sp. (strain JA-2-3B'a(2-13)) (Cyanobacteria bacterium Yellowstone B-Prime) protein is Ribosome maturation factor RimM.